The chain runs to 132 residues: Small ribosomal subunit protein uS8 (132 aa).

Belongs to the universal ribosomal protein uS8 family. As to quaternary structure, part of the 30S ribosomal subunit. Contacts proteins S5 and S12.

Functionally, one of the primary rRNA binding proteins, it binds directly to 16S rRNA central domain where it helps coordinate assembly of the platform of the 30S subunit. This Syntrophobacter fumaroxidans (strain DSM 10017 / MPOB) protein is Small ribosomal subunit protein uS8.